The primary structure comprises 392 residues: uncharacterized protein (392 aa).

It belongs to the glycosyltransferase 2 family.

This is an uncharacterized protein from Bacillus subtilis (strain 168).